Reading from the N-terminus, the 322-residue chain is Pantothenate kinase (322 aa).

ATP is bound at residue 104-111 (GSVAVGKS).

This sequence belongs to the prokaryotic pantothenate kinase family.

The protein resides in the cytoplasm. The enzyme catalyses (R)-pantothenate + ATP = (R)-4'-phosphopantothenate + ADP + H(+). Its pathway is cofactor biosynthesis; coenzyme A biosynthesis; CoA from (R)-pantothenate: step 1/5. The chain is Pantothenate kinase from Leifsonia xyli subsp. xyli (strain CTCB07).